The chain runs to 285 residues: Polyamine aminopropyltransferase (285 aa).

The PABS domain occupies 5-241 (DNWYIEHFQP…GWWSVTMASK (237 aa)). Residue glutamine 35 coordinates S-methyl-5'-thioadenosine. Spermidine contacts are provided by histidine 66 and aspartate 90. Residues aspartate 110 and 141-142 (DG) contribute to the S-methyl-5'-thioadenosine site. The active-site Proton acceptor is the aspartate 160. 160-163 (DSTD) is a binding site for spermidine. Residue proline 167 participates in S-methyl-5'-thioadenosine binding.

The protein belongs to the spermidine/spermine synthase family. Homodimer or homotetramer.

It is found in the cytoplasm. The enzyme catalyses S-adenosyl 3-(methylsulfanyl)propylamine + putrescine = S-methyl-5'-thioadenosine + spermidine + H(+). The protein operates within amine and polyamine biosynthesis; spermidine biosynthesis; spermidine from putrescine: step 1/1. Catalyzes the irreversible transfer of a propylamine group from the amino donor S-adenosylmethioninamine (decarboxy-AdoMet) to putrescine (1,4-diaminobutane) to yield spermidine. This chain is Polyamine aminopropyltransferase, found in Xanthomonas campestris pv. campestris (strain 8004).